The chain runs to 275 residues: L-aspartate dehydrogenase (275 aa).

2 residues coordinate NAD(+): A130 and N196. The active site involves H226.

This sequence belongs to the L-aspartate dehydrogenase family.

It catalyses the reaction L-aspartate + NADP(+) + H2O = oxaloacetate + NH4(+) + NADPH + H(+). The catalysed reaction is L-aspartate + NAD(+) + H2O = oxaloacetate + NH4(+) + NADH + H(+). The protein operates within cofactor biosynthesis; NAD(+) biosynthesis; iminoaspartate from L-aspartate (dehydrogenase route): step 1/1. Specifically catalyzes the NAD or NADP-dependent dehydrogenation of L-aspartate to iminoaspartate. The sequence is that of L-aspartate dehydrogenase from Ruegeria pomeroyi (strain ATCC 700808 / DSM 15171 / DSS-3) (Silicibacter pomeroyi).